The primary structure comprises 240 residues: tRNA pseudouridine synthase B (240 aa).

The active-site Nucleophile is Asp54.

The protein belongs to the pseudouridine synthase TruB family. Type 1 subfamily.

It carries out the reaction uridine(55) in tRNA = pseudouridine(55) in tRNA. In terms of biological role, responsible for synthesis of pseudouridine from uracil-55 in the psi GC loop of transfer RNAs. This Chlorobaculum tepidum (strain ATCC 49652 / DSM 12025 / NBRC 103806 / TLS) (Chlorobium tepidum) protein is tRNA pseudouridine synthase B.